We begin with the raw amino-acid sequence, 123 residues long: Small ribosomal subunit protein uS12 (123 aa).

At Asp-89 the chain carries 3-methylthioaspartic acid. A disordered region spans residues 104 to 123 (TAGVKDRKQARSKYGAKRPK). Basic residues predominate over residues 113-123 (ARSKYGAKRPK).

Belongs to the universal ribosomal protein uS12 family. In terms of assembly, part of the 30S ribosomal subunit. Contacts proteins S8 and S17. May interact with IF1 in the 30S initiation complex.

With S4 and S5 plays an important role in translational accuracy. Its function is as follows. Interacts with and stabilizes bases of the 16S rRNA that are involved in tRNA selection in the A site and with the mRNA backbone. Located at the interface of the 30S and 50S subunits, it traverses the body of the 30S subunit contacting proteins on the other side and probably holding the rRNA structure together. The combined cluster of proteins S8, S12 and S17 appears to hold together the shoulder and platform of the 30S subunit. The protein is Small ribosomal subunit protein uS12 of Neisseria gonorrhoeae (strain ATCC 700825 / FA 1090).